The following is a 304-amino-acid chain: tRNA pseudouridine synthase B (304 aa).

D38 acts as the Nucleophile in catalysis. In terms of domain architecture, PUA spans 227–302 (LPKVEIYKDF…RIFKLKKVFK (76 aa)).

Belongs to the pseudouridine synthase TruB family. Type 1 subfamily.

It catalyses the reaction uridine(55) in tRNA = pseudouridine(55) in tRNA. In terms of biological role, responsible for synthesis of pseudouridine from uracil-55 in the psi GC loop of transfer RNAs. The protein is tRNA pseudouridine synthase B of Thermosipho melanesiensis (strain DSM 12029 / CIP 104789 / BI429).